Here is a 159-residue protein sequence, read N- to C-terminus: Growth arrest and DNA damage-inducible protein GADD45 gamma (159 aa).

Residues 43 to 86 (VYESAKVLNVDPDNVTFCVLAADEEDEGDIALQIHFTLIQAFCC) are homodimerization.

Belongs to the GADD45 family. In terms of assembly, undergoes concentration-dependent homodimerization, which is required for growth inhibititory activity and enhances interaction with PCNA. Interacts with GADD45GIP1. Interacts with PCNA.

Its function is as follows. Involved in the regulation of growth and apoptosis. Mediates activation of stress-responsive MTK1/MEKK4 MAPKKK. This is Growth arrest and DNA damage-inducible protein GADD45 gamma (GADD45G) from Bos taurus (Bovine).